Reading from the N-terminus, the 654-residue chain is MTQTTESELREKYLDLLSQQFDSPEKLATEIVNLESILELPKGTEHFVSDLHGEYESFQHVLRNGSGNVRSKINDLYAKTLSQKEIDDLAALVYYPEEKLKLVKNNFDSKGKLNVWYITTIEQLIDLITYCSSKYTRSKLRKALPKEYTYIVEELLYKNNEFNNKKSYYETLVNQIIELEQSDDLIIGLSYSIQRLVVDHLHVVGDIYDRGPQPDKIMDTLINYHSVDIQWGNHDVLWIGAYAGSKACLANLLRICARYDNLDIIEDAYGINLRPLLTLAEEHYNGENPAFKPKKRPDKPVGLSKLEESQITKIHQAIAMIQFKLEMPIIKRRPTFEMEDRLVLEKVNYDTNEITIYGKTYPLKDTCFSTVDPQDPGKLLPEEEEVMNKLLLSFQQSEKLKRHMSFLMKKGKLYLPYNGNLLIHGCIPVDENGEMESFEIEGEQHKGRDLLDVFERHVRYAYDYKEITDDLSTDLVWYLWTGKYSSLFGKRAMTTFERYFIEDKASHKEPKNPYYYLREDVDMIRKMLKDFGLNPDEGRIINGHTPVKEIDGEDPIKADGKMLVIDGGFSKAYQKTTGIAGYTLLYNSFGMQLVAHQHFDSRDKVLSDGADELSVRRVVDEELQRKKIRDTNDGKVLQEQIRILKLLMHDRYLN.

This sequence belongs to the FBPase class 3 family. It depends on Mn(2+) as a cofactor.

It carries out the reaction beta-D-fructose 1,6-bisphosphate + H2O = beta-D-fructose 6-phosphate + phosphate. It participates in carbohydrate biosynthesis; gluconeogenesis. This is Fructose-1,6-bisphosphatase class 3 from Staphylococcus haemolyticus (strain JCSC1435).